Here is a 131-residue protein sequence, read N- to C-terminus: MAKGSKRVVRKRAEKKNIANGIAHIQATFNNTIVTITDIAGNVISWSTCGTMNFKGSRKSTPFAAQIAAEDAAKKAMEHGLRSVEVRVKGPGSGRESALRALSSAGLNISVIKDVTPIPHNGCRPPKRRRV.

The protein belongs to the universal ribosomal protein uS11 family. As to quaternary structure, part of the 30S ribosomal subunit. Interacts with proteins S7 and S18. Binds to IF-3.

Located on the platform of the 30S subunit, it bridges several disparate RNA helices of the 16S rRNA. Forms part of the Shine-Dalgarno cleft in the 70S ribosome. In Syntrophotalea carbinolica (strain DSM 2380 / NBRC 103641 / GraBd1) (Pelobacter carbinolicus), this protein is Small ribosomal subunit protein uS11.